The chain runs to 237 residues: Ribonuclease PH (237 aa).

Phosphate is bound by residues Arg-86 and 124 to 126 (GTR).

This sequence belongs to the RNase PH family. As to quaternary structure, homohexameric ring arranged as a trimer of dimers.

It catalyses the reaction tRNA(n+1) + phosphate = tRNA(n) + a ribonucleoside 5'-diphosphate. Its function is as follows. Phosphorolytic 3'-5' exoribonuclease that plays an important role in tRNA 3'-end maturation. Removes nucleotide residues following the 3'-CCA terminus of tRNAs; can also add nucleotides to the ends of RNA molecules by using nucleoside diphosphates as substrates, but this may not be physiologically important. Probably plays a role in initiation of 16S rRNA degradation (leading to ribosome degradation) during starvation. The protein is Ribonuclease PH of Xanthobacter autotrophicus (strain ATCC BAA-1158 / Py2).